Consider the following 347-residue polypeptide: Dihydroorotase (347 aa).

Zn(2+) contacts are provided by His13 and His15. Residues 15–17 and Asn41 contribute to the substrate site; that span reads HLR. Lys99, His136, and His174 together coordinate Zn(2+). Lys99 carries the post-translational modification N6-carboxylysine. Substrate is bound at residue His136. Position 219 (Leu219) interacts with substrate. Residue Asp247 coordinates Zn(2+). The active site involves Asp247. His251 and Ala263 together coordinate substrate.

The protein belongs to the metallo-dependent hydrolases superfamily. DHOase family. Class II DHOase subfamily. Homodimer. Zn(2+) serves as cofactor.

The enzyme catalyses (S)-dihydroorotate + H2O = N-carbamoyl-L-aspartate + H(+). It participates in pyrimidine metabolism; UMP biosynthesis via de novo pathway; (S)-dihydroorotate from bicarbonate: step 3/3. Functionally, catalyzes the reversible cyclization of carbamoyl aspartate to dihydroorotate. In Sinorhizobium medicae (strain WSM419) (Ensifer medicae), this protein is Dihydroorotase.